Consider the following 461-residue polypeptide: Polycomb group protein FIE1 (461 aa).

Basic residues predominate over residues 1–11; sequence MPPSKARRKRS. Residues 1-56 form a disordered region; it reads MPPSKARRKRSLRDITATVATGTVANSKPGSSSTNEGKQQDKKKEGPQEPDIPPLP. Polar residues predominate over residues 18 to 37; it reads TVATGTVANSKPGSSSTNEG. Residues 38 to 47 show a composition bias toward basic and acidic residues; it reads KQQDKKKEGP. WD repeat units follow at residues 143–186, 189–229, 235–275, 301–338, 351–391, and 398–437; these read DKDE…LDKS, GHGG…CILV, GHRH…IYVE, VHSDYVDCTRWLGDFILSKSVKNAVLLWEPKPDKRRPG, PKCS…PVLI, and ECKSPIRQTAVSFDGSTILGAADDGAIWRWDEVDPAASSS. Residues 429-461 form a disordered region; sequence EVDPAASSSKPDQAAAPAAGVGAGAGADADADA. A compositionally biased stretch (low complexity) spans 432-448; that stretch reads PAASSSKPDQAAAPAAG.

This sequence belongs to the WD repeat ESC family. In terms of tissue distribution, specifically expressed in kernel starting from 6 days after pollination.

The protein localises to the nucleus. Polycomb group (PcG) protein. PcG proteins act by forming multiprotein complexes, which are required to maintain the transcriptionally repressive state of homeotic genes throughout development. PcG proteins are not required to initiate repression, but to maintain it during later stages of development. They probably act via the methylation of histones, rendering chromatin heritably changed in its expressibility. The chain is Polycomb group protein FIE1 (FIE1) from Zea mays (Maize).